Consider the following 158-residue polypeptide: S-ribosylhomocysteine lyase (158 aa).

Fe cation is bound by residues histidine 54, histidine 58, and cysteine 124.

Belongs to the LuxS family. As to quaternary structure, homodimer. Fe cation is required as a cofactor.

It catalyses the reaction S-(5-deoxy-D-ribos-5-yl)-L-homocysteine = (S)-4,5-dihydroxypentane-2,3-dione + L-homocysteine. Its function is as follows. Involved in the synthesis of autoinducer 2 (AI-2) which is secreted by bacteria and is used to communicate both the cell density and the metabolic potential of the environment. The regulation of gene expression in response to changes in cell density is called quorum sensing. Catalyzes the transformation of S-ribosylhomocysteine (RHC) to homocysteine (HC) and 4,5-dihydroxy-2,3-pentadione (DPD). The polypeptide is S-ribosylhomocysteine lyase (Lactiplantibacillus plantarum (strain ATCC BAA-793 / NCIMB 8826 / WCFS1) (Lactobacillus plantarum)).